Consider the following 283-residue polypeptide: MCNTPTYCDLGKAAKDVFNKGYGFGMVKIDLKTKSCSGVEFSTSGHAYTDTGKASGNLETKYKVCNYGLTFTQKWNTDNTLGTEISWENKLAEGLKLTLDTIFVPNTGKKSGKLKASYRRDCFSLGSNVDIDFSGPTIYGWAVLAFEGWLAGYQMSFDTAKSKLSQNNFALGYKAADFQLHTHVNDGTEFGGSIYQKVNERIETSINLAWTAGSNNTRFGIAAKYKLDCRTSLSAKVNNASLIGLGYTQTLRPGVKLTLSALIDGKNFNAGGHKVGLGFELEA.

Cys2 bears the N-acetylcysteine mark. At Thr4 the chain carries Phosphothreonine. Lys12, Lys15, and Lys20 each carry N6-acetyllysine. Beta stranded transmembrane passes span 26 to 35 and 39 to 47; these read MVKIDLKTKS and VEFSTSGHA. Lys53 participates in a covalent cross-link: Glycyl lysine isopeptide (Lys-Gly) (interchain with G-Cter in ubiquitin). The next 3 membrane-spanning stretches (beta stranded) occupy residues 54 to 64, 69 to 76, and 80 to 89; these read ASGNLETKYKV, LTFTQKWN, and TLGTEISWEN. The residue at position 90 (Lys90) is an N6-acetyllysine. Residues 95–104 traverse the membrane as a beta stranded segment; sequence LKLTLDTIFV. Glycyl lysine isopeptide (Lys-Gly) (interchain with G-Cter in ubiquitin) cross-links involve residues Lys109 and Lys110. Beta stranded transmembrane passes span 111–120, 123–130, 137–145, 150–158, 163–175, 178–185, 189–198, 202–211, 218–227, and 231–238; these read SGKLKASYRR, FSLGSNVD, TIYGWAVLA, LAGYQMSFD, KLSQ…GYKA, FQLHTHVN, EFGGSIYQKV, IETSINLAWT, RFGIAAKYKL, and TSLSAKVN. Position 241 is a phosphoserine (Ser241). NAD(+) is bound by residues 242-244 and 260-264; these read LIG and SALID. Beta stranded transmembrane passes span 242 to 251 and 254 to 263; these read LIGLGYTQTL and GVKLTLSALI. N6-acetyllysine; alternate is present on Lys266. A Glycyl lysine isopeptide (Lys-Gly) (interchain with G-Cter in ubiquitin); alternate cross-link involves residue Lys266. A beta stranded transmembrane segment spans residues 273–282; that stretch reads HKVGLGFELE.

Belongs to the eukaryotic mitochondrial porin family. Interacts with ARMC12 in a TBC1D21-dependent manner. Interacts with MISFA. Ubiquitinated by PRKN during mitophagy, leading to its degradation and enhancement of mitophagy. Deubiquitinated by USP30. As to expression, highest levels of expression detected in testis, less but still abundant expression in heart, kidney, brain, and skeletal muscle.

It is found in the mitochondrion outer membrane. The protein localises to the membrane. The catalysed reaction is chloride(in) = chloride(out). It carries out the reaction K(+)(in) = K(+)(out). Functionally, non-selective voltage-gated ion channel that mediates the transport of anions and cations through the mitochondrion outer membrane and plasma membrane. Forms a high-conducting channel with a stable open state and a voltage-induced closure with a mild preference for anions over cations. Involved in male fertility and sperm mitochondrial sheath formation. The polypeptide is Non-selective voltage-gated ion channel VDAC3 (Mus musculus (Mouse)).